We begin with the raw amino-acid sequence, 229 residues long: Cytidylate kinase (229 aa).

An ATP-binding site is contributed by 15 to 23 (GPAASGKST).

Belongs to the cytidylate kinase family. Type 1 subfamily.

The protein resides in the cytoplasm. The catalysed reaction is CMP + ATP = CDP + ADP. The enzyme catalyses dCMP + ATP = dCDP + ADP. The protein is Cytidylate kinase of Herpetosiphon aurantiacus (strain ATCC 23779 / DSM 785 / 114-95).